We begin with the raw amino-acid sequence, 98 residues long: NADH-ubiquinone oxidoreductase chain 4L (98 aa).

A run of 2 helical transmembrane segments spans residues 26 to 46 and 61 to 81; these read LVAS…MATL and IILL…LISI.

It belongs to the complex I subunit 4L family. Core subunit of respiratory chain NADH dehydrogenase (Complex I) which is composed of 45 different subunits.

Its subcellular location is the mitochondrion inner membrane. It carries out the reaction a ubiquinone + NADH + 5 H(+)(in) = a ubiquinol + NAD(+) + 4 H(+)(out). Its function is as follows. Core subunit of the mitochondrial membrane respiratory chain NADH dehydrogenase (Complex I) which catalyzes electron transfer from NADH through the respiratory chain, using ubiquinone as an electron acceptor. Part of the enzyme membrane arm which is embedded in the lipid bilayer and involved in proton translocation. In Macaca nigrescens (Gorontalo macaque), this protein is NADH-ubiquinone oxidoreductase chain 4L (MT-ND4L).